A 57-amino-acid chain; its full sequence is uncharacterized protein (57 aa).

The helical transmembrane segment at phenylalanine 4–histidine 26 threads the bilayer.

Its subcellular location is the membrane. This is an uncharacterized protein from Saccharomyces cerevisiae (strain ATCC 204508 / S288c) (Baker's yeast).